A 905-amino-acid polypeptide reads, in one-letter code: Protein translocase subunit SecA (905 aa).

ATP-binding positions include Gln-89, Gly-107 to Thr-111, and Asp-502. Zn(2+)-binding residues include Cys-887, Cys-889, Cys-898, and His-899.

The protein belongs to the SecA family. In terms of assembly, monomer and homodimer. Part of the essential Sec protein translocation apparatus which comprises SecA, SecYEG and auxiliary proteins SecDF-YajC and YidC. Requires Zn(2+) as cofactor.

Its subcellular location is the cell inner membrane. It localises to the cytoplasm. It catalyses the reaction ATP + H2O + cellular proteinSide 1 = ADP + phosphate + cellular proteinSide 2.. Part of the Sec protein translocase complex. Interacts with the SecYEG preprotein conducting channel. Has a central role in coupling the hydrolysis of ATP to the transfer of proteins into and across the cell membrane, serving both as a receptor for the preprotein-SecB complex and as an ATP-driven molecular motor driving the stepwise translocation of polypeptide chains across the membrane. In Rhizobium leguminosarum bv. trifolii (strain WSM2304), this protein is Protein translocase subunit SecA.